Reading from the N-terminus, the 341-residue chain is MLVLGLETSCDETGVALYDSRRGLLADALFSQIDLHRIYGGVVPELASRDHVKRMLPLLRQVLDESGCRTGDIDGIAYTAGPGLVGALLVGASCAQALALAWGVPALGVHHMEGHLLAPMLEEQPPQFPFVALLVSGGHTQLVRVDGIGRYQVLGESLDDAAGEAFDKTAKLLGLGYPGGPEIARLAQDGRPGRFVFPRPMTDRPGLEFSFSGLKTFALNTWQHCRASGDDGEQSRRDIALAFQQAVVETLIIKCRRALKQTGLKRLVIAGGVSANQALRSALERMLGELDGQVFYARPRFCTDNGAMIAYAGCQRLLAGQRDGPAIQVHARWPMETLPAL.

Fe cation-binding residues include His111 and His115. Residues 134 to 138 (LVSGG), Asp167, Gly180, and Asn276 contribute to the substrate site. Asp304 contributes to the Fe cation binding site.

It belongs to the KAE1 / TsaD family. Fe(2+) is required as a cofactor.

It localises to the cytoplasm. It catalyses the reaction L-threonylcarbamoyladenylate + adenosine(37) in tRNA = N(6)-L-threonylcarbamoyladenosine(37) in tRNA + AMP + H(+). Required for the formation of a threonylcarbamoyl group on adenosine at position 37 (t(6)A37) in tRNAs that read codons beginning with adenine. Is involved in the transfer of the threonylcarbamoyl moiety of threonylcarbamoyl-AMP (TC-AMP) to the N6 group of A37, together with TsaE and TsaB. TsaD likely plays a direct catalytic role in this reaction. The sequence is that of tRNA N6-adenosine threonylcarbamoyltransferase from Azotobacter vinelandii (strain DJ / ATCC BAA-1303).